We begin with the raw amino-acid sequence, 55 residues long: Large ribosomal subunit protein bL33 (55 aa).

The protein belongs to the bacterial ribosomal protein bL33 family.

This chain is Large ribosomal subunit protein bL33, found in Rhodopseudomonas palustris (strain BisA53).